A 224-amino-acid polypeptide reads, in one-letter code: Aminopyrimidine aminohydrolase (224 aa).

Aspartate 44 lines the substrate pocket. Cysteine 135 functions as the Nucleophile in the catalytic mechanism. Substrate contacts are provided by tyrosine 139 and tyrosine 165. The active-site Proton donor is glutamate 207.

This sequence belongs to the TenA family. In terms of assembly, homotetramer.

The catalysed reaction is 4-amino-5-aminomethyl-2-methylpyrimidine + H2O = 4-amino-5-hydroxymethyl-2-methylpyrimidine + NH4(+). It catalyses the reaction thiamine + H2O = 5-(2-hydroxyethyl)-4-methylthiazole + 4-amino-5-hydroxymethyl-2-methylpyrimidine + H(+). The protein operates within cofactor biosynthesis; thiamine diphosphate biosynthesis. Catalyzes an amino-pyrimidine hydrolysis reaction at the C5' of the pyrimidine moiety of thiamine compounds, a reaction that is part of a thiamine salvage pathway. Thus, catalyzes the conversion of 4-amino-5-aminomethyl-2-methylpyrimidine to 4-amino-5-hydroxymethyl-2-methylpyrimidine (HMP). To a lesser extent, is also able to catalyze the hydrolytic cleavage of thiamine; however, this thiaminase activity is unlikely to be physiologically relevant. Therefore, is involved in the regeneration of the thiamine pyrimidine from thiamine degraded products present in the environment, rather than in thiamine degradation. This chain is Aminopyrimidine aminohydrolase, found in Halalkalibacterium halodurans (strain ATCC BAA-125 / DSM 18197 / FERM 7344 / JCM 9153 / C-125) (Bacillus halodurans).